Consider the following 96-residue polypeptide: uncharacterized protein (96 aa).

This is an uncharacterized protein from Saccharomyces cerevisiae (strain ATCC 204508 / S288c) (Baker's yeast).